The chain runs to 219 residues: Probable cutinase 4 (219 aa).

The signal sequence occupies residues 1–17 (MILPSLLVASLSALAAA). Cystine bridges form between C41-C120 and C67-C81. Residue N99 is glycosylated (N-linked (GlcNAc...) asparagine). S131 acts as the Nucleophile in catalysis. C182 and C189 are joined by a disulfide. D186 is a catalytic residue. Residue H199 is the Proton donor/acceptor of the active site.

The protein belongs to the cutinase family.

The protein localises to the secreted. It catalyses the reaction cutin + H2O = cutin monomers.. Catalyzes the hydrolysis of complex carboxylic polyesters found in the cell wall of plants. Degrades cutin, a macromolecule that forms the structure of the plant cuticle. The polypeptide is Probable cutinase 4 (Aspergillus terreus (strain NIH 2624 / FGSC A1156)).